Here is a 917-residue protein sequence, read N- to C-terminus: Protein translocase subunit SecA (917 aa).

Residues Gln87, 105–109 (GEGKT), and Asp516 contribute to the ATP site. Cys901, Cys903, Cys912, and His913 together coordinate Zn(2+).

This sequence belongs to the SecA family. Monomer and homodimer. Part of the essential Sec protein translocation apparatus which comprises SecA, SecYEG and auxiliary proteins SecDF-YajC and YidC. Requires Zn(2+) as cofactor.

The protein resides in the cell inner membrane. The protein localises to the cytoplasm. The catalysed reaction is ATP + H2O + cellular proteinSide 1 = ADP + phosphate + cellular proteinSide 2.. Functionally, part of the Sec protein translocase complex. Interacts with the SecYEG preprotein conducting channel. Has a central role in coupling the hydrolysis of ATP to the transfer of proteins into and across the cell membrane, serving both as a receptor for the preprotein-SecB complex and as an ATP-driven molecular motor driving the stepwise translocation of polypeptide chains across the membrane. This chain is Protein translocase subunit SecA, found in Acidovorax ebreus (strain TPSY) (Diaphorobacter sp. (strain TPSY)).